A 142-amino-acid polypeptide reads, in one-letter code: 3-hydroxyacyl-[acyl-carrier-protein] dehydratase FabZ (142 aa).

Residue histidine 48 is part of the active site.

This sequence belongs to the thioester dehydratase family. FabZ subfamily.

Its subcellular location is the cytoplasm. It catalyses the reaction a (3R)-hydroxyacyl-[ACP] = a (2E)-enoyl-[ACP] + H2O. Functionally, involved in unsaturated fatty acids biosynthesis. Catalyzes the dehydration of short chain beta-hydroxyacyl-ACPs and long chain saturated and unsaturated beta-hydroxyacyl-ACPs. In Prochlorococcus marinus (strain MIT 9313), this protein is 3-hydroxyacyl-[acyl-carrier-protein] dehydratase FabZ.